A 315-amino-acid polypeptide reads, in one-letter code: Nucleotide-binding protein CGSHiEE_06315 (315 aa).

8–15 lines the ATP pocket; it reads GRSGAGKS. 56 to 59 contributes to the GTP binding site; it reads DIRN.

Belongs to the RapZ-like family.

In terms of biological role, displays ATPase and GTPase activities. The sequence is that of Nucleotide-binding protein CGSHiEE_06315 from Haemophilus influenzae (strain PittEE).